We begin with the raw amino-acid sequence, 472 residues long: Eukaryotic translation initiation factor 2 subunit 3 (472 aa).

Ala2 carries the post-translational modification N-acetylalanine. Phosphoserine is present on Ser16. The tr-type G domain maps to 39–248; sequence QATINIGTIG…IVKKIPVPPR (210 aa). The G1 stretch occupies residues 48 to 55; the sequence is GHVAHGKS. 51–56 is a GTP binding site; the sequence is AHGKST. The segment at 76-80 is G2; sequence NITIK. The tract at residues 134–137 is G3; sequence DCPG. GTP-binding positions include 190–193 and 225–227; these read NKID and SAQ. The tract at residues 190–193 is G4; that stretch reads NKID. Residues 225-227 are G5; sequence SAQ. Residues 457–469 are interacts with CDC123; it reads GQIRRGVTIKPTV.

It belongs to the TRAFAC class translation factor GTPase superfamily. Classic translation factor GTPase family. EIF2G subfamily. Eukaryotic translation initiation factor 2 eIF2 is a heterotrimeric complex composed of an alpha (EIF2S1), a beta (EIF2S2) and a gamma (EIF2S3) chain. eIF2 is member of the 43S pre-initiation complex (43S PIC). Interacts (via C-terminus) with CDC123; the interaction is direct.

It localises to the cytoplasm. It is found in the cytosol. It catalyses the reaction GTP + H2O = GDP + phosphate + H(+). In terms of biological role, member of the eIF2 complex that functions in the early steps of protein synthesis by forming a ternary complex with GTP and initiator tRNA. This complex binds to a 40S ribosomal subunit, followed by mRNA binding to form the 43S pre-initiation complex (43S PIC). Junction of the 60S ribosomal subunit to form the 80S initiation complex is preceded by hydrolysis of the GTP bound to eIF2 and release of an eIF2-GDP binary complex. In order for eIF2 to recycle and catalyze another round of initiation, the GDP bound to eIF2 must exchange with GTP by way of a reaction catalyzed by eIF-2B. This Sus scrofa (Pig) protein is Eukaryotic translation initiation factor 2 subunit 3 (EIF2S3).